Consider the following 709-residue polypeptide: Leucine-rich repeat and calponin homology domain-containing protein 1 (709 aa).

Positions leucine 24–histidine 37 are enriched in basic residues. Positions leucine 24–leucine 49 are disordered. 9 LRR repeats span residues alanine 60–glycine 83, leucine 86–glutamine 108, phenylalanine 109–asparagine 131, leucine 132–leucine 155, leucine 157–glutamine 176, leucine 177–glutamine 199, leucine 200–leucine 223, leucine 225–glutamate 244, and methionine 245–lysine 268. 2 stretches are compositionally biased toward basic and acidic residues: residues histidine 301 to aspartate 312 and glutamine 381 to alanine 390. Residues histidine 301–alanine 390 form a disordered region. A phosphoserine mark is found at serine 395, serine 518, and serine 522. The interval serine 504–asparagine 526 is disordered. Threonine 581 carries the phosphothreonine modification. Residues methionine 589 to threonine 702 enclose the Calponin-homology (CH) domain.

In terms of assembly, interacts (via LRR repeats) with unphosphorylated DOCK8 (via DHR-2 domain); the interaction prevents the association between DOCK8 and CDC42.

Its subcellular location is the cytoplasm. In terms of biological role, acts as a negative regulator of GTPase CDC42 by sequestering CDC42-guanine exchange factor DOCK8. Probably by preventing CDC42 activation, negatively regulates CD4(+) T-cell migration in response to chemokine stimulation. In Mus musculus (Mouse), this protein is Leucine-rich repeat and calponin homology domain-containing protein 1 (Lrch1).